Reading from the N-terminus, the 1193-residue chain is Falcilysin (1193 aa).

Residue His-129 coordinates Zn(2+). The active-site Proton acceptor is the Glu-132. Positions 133 and 243 each coordinate Zn(2+). Positions 376–404 (DKTNNHNNNHSNNQSSENNGYSNGSHSSD) are disordered. A compositionally biased stretch (low complexity) spans 380–394 (NHNNNHSNNQSSENN). A compositionally biased stretch (polar residues) spans 395-404 (GYSNGSHSSD). The stretch at 583–619 (LLEGDENYAQEQENLEKQELKKRIENFNEQEKEQVIK) forms a coiled coil.

Belongs to the peptidase M16 family. As to quaternary structure, monomer. Component of the hemozoin formation complex (HFC) composed of falcipains FP2A and/or FP2B, plasmepsins PMII, PMIII/HAP and PMIV, heme detoxifying protein HDP and falcilysin FLN. The HFC complex is involved in hemoglobin degradation and detoxification of heme in the food vacuole during the asexual blood stage. Zn(2+) is required as a cofactor. In terms of processing, does not require processing for targeting to the food vacuole or maturation.

The protein localises to the vacuole membrane. It localises to the plastid. The protein resides in the apicoplast. It is found in the vesicle. In the food vacuole, acts downstream of proteases plasmepsins PMI and PMII and falcipains during the catabolism of host hemoglobin by cleaving peptide fragments of alpha and beta hemoglobin subunits generated by PMI and PMII and falcipains. In the apicoplast, degrades apicoplast transit peptides after their cleavage. Prefers bulky hydrophobic amino acids in the P1' position at both acidic and neutral pH. At P2', prefers hydrophobic residues at acidic pH; at neutral pH, these same residues are abundant but prefers Arg. At P3', prefers hydrophobic residues, especially Met, at both pH conditions. At P4' and P5', prefers acidic residues at acidic pH, however, at neutral pH, the enzyme is less selective at these positions. The optimal site cleavage at acidic pH is YNEHS-|-FFMEE and, at neutral pH, MKRHS-|-FRMRG. This Plasmodium falciparum (isolate 3D7) protein is Falcilysin.